We begin with the raw amino-acid sequence, 103 residues long: N(4)-acetylcytidine amidohydrolase (103 aa).

The 96-residue stretch at 6–101 (ITFFQRFQDD…QTQFYVIEFK (96 aa)) folds into the ASCH domain. Lys21 (proton acceptor) is an active-site residue. Residue Thr24 is the Nucleophile of the active site. Glu74 functions as the Proton donor in the catalytic mechanism.

It belongs to the N(4)-acetylcytidine amidohydrolase family.

The enzyme catalyses N(4)-acetylcytidine + H2O = cytidine + acetate + H(+). The catalysed reaction is N(4)-acetyl-2'-deoxycytidine + H2O = 2'-deoxycytidine + acetate + H(+). It carries out the reaction N(4)-acetylcytosine + H2O = cytosine + acetate + H(+). In terms of biological role, catalyzes the hydrolysis of N(4)-acetylcytidine (ac4C). This is N(4)-acetylcytidine amidohydrolase (yqfB) from Escherichia coli O127:H6 (strain E2348/69 / EPEC).